The chain runs to 290 residues: Plasma membrane ascorbate-dependent reductase CYBRD1 (290 aa).

Topologically, residues 1-7 (MAMEGYR) are cytoplasmic. The chain crosses the membrane as a helical span at residues 8–32 (GFLGLLVSALLVGFLSVIFVLIWVL). A Cytochrome b561 domain is found at 15 to 220 (SALLVGFLSV…FGALIFWIVT (206 aa)). Residues 33-47 (HFREGLGWNGSGLEF) lie on the Extracellular side of the membrane. The chain crosses the membrane as a helical span at residues 48 to 69 (NWHPVLAVTGFVFIQGIAIIVY). 3 residues coordinate heme b: His-50, Arg-70, and Lys-79. Topologically, residues 70–78 (RLPWTWKCS) are cytoplasmic. L-ascorbate is bound by residues Lys-79 and Lys-83. A helical transmembrane segment spans residues 79-105 (KLLMKSIHAGLNAVAAILAIISVVAVF). Position 86 (His-86) interacts with heme b. The Extracellular portion of the chain corresponds to 106-118 (EYHNVQKVPHMYS). His-108 lines the Fe(3+) pocket. Residues 115–118 (HMYS) and His-120 each bind heme b. A helical transmembrane segment spans residues 119–144 (LHSWVGLTALILYIQQLVVGFFVFLL). The Cytoplasmic segment spans residues 145-151 (PWAPPSL). Arg-152 lines the L-ascorbate pocket. Residues 152–179 (RAIVMPIHVYSGLLLFGTVIATVLMGVT) traverse the membrane as a helical segment. Heme b-binding residues include His-159 and Glu-180. The Extracellular segment spans residues 180–197 (EKLFFVLKHPSYHSFPPE). A helical membrane pass occupies residues 198-222 (GVFTNTLGLLILVFGALIFWIVTRP). Over 223–290 (QWKRPREPGS…LADSGQRSTM (68 aa)) the chain is Cytoplasmic. Residue Lys-225 coordinates heme b. The residue at position 232 (Ser-232) is a Phosphoserine. The interval 257 to 290 (SMDAADPADAESSSEGAARKRTLGLADSGQRSTM) is disordered. The span at 260-272 (AADPADAESSSEG) shows a compositional bias: low complexity. Thr-289 is subject to Phosphothreonine.

Homodimer. The cofactor is heme b. Highly expressed in the brush-border membrane of duodenal enterocytes (at protein level). Also expressed in liver and spleen.

The protein localises to the cell membrane. The protein resides in the apical cell membrane. The enzyme catalyses Fe(3+)(out) + L-ascorbate(in) = monodehydro-L-ascorbate radical(in) + Fe(2+)(out) + H(+). It catalyses the reaction Cu(2+)(out) + L-ascorbate(in) = Cu(+)(out) + monodehydro-L-ascorbate radical(in) + H(+). It carries out the reaction monodehydro-L-ascorbate radical(out) + L-ascorbate(in) = monodehydro-L-ascorbate radical(in) + L-ascorbate(out). Functionally, plasma membrane reductase that uses cytoplasmic ascorbate as an electron donor to reduce extracellular Fe(3+) into Fe(2+). Probably functions in dietary iron absorption at the brush border of duodenal enterocytes by producing Fe(2+), the divalent form of iron that can be transported into enterocytes. It is also able to reduce extracellular monodehydro-L-ascorbate and may be involved in extracellular ascorbate regeneration by erythrocytes in blood. May also act as a ferrireductase in airway epithelial cells. May also function as a cupric transmembrane reductase. This chain is Plasma membrane ascorbate-dependent reductase CYBRD1, found in Mus musculus (Mouse).